The chain runs to 2003 residues: Histone acetyltransferase KAT6A (2003 aa).

In terms of domain architecture, SAMD1-like winged helix (WH) spans 1 to 77 (MVKLANPLYT…LNSYKDPDNP (77 aa)). The segment at 1 to 144 (MVKLANPLYT…CGGSAAPGFH (144 aa)) is required for activation of RUNX1-1. Positions 52 to 166 (ELSVKDGTIL…HGRLLKDGPL (115 aa)) are required for nuclear localization. In terms of domain architecture, H15 spans 95 to 171 (QSVDWNKLLK…KDGPLYRLNT (77 aa)). The tract at residues 144–663 (HQQLRLAIKR…RKGYGRFLID (520 aa)) is interaction with PML. Lys-172 is subject to N6-acetyllysine. 2 consecutive PHD-type zinc fingers follow at residues 206–265 (IPIC…CKTC) and 262–313 (CKTC…CRPR). The interaction with RUNX1-1 stretch occupies residues 312–663 (PRKKGRKLLQ…RKGYGRFLID (352 aa)). The interval 336–377 (GRPKNRLKKQNTVSKGPFSKVRTGPGRGRKRKITVSSQSASS) is disordered. Residues Lys-350 and Lys-355 each carry the N6-acetyllysine modification. Thr-369 is subject to Phosphothreonine; by PKB/AKT1. Ser-419 carries the phosphoserine modification. Positions 439–466 (RKKGNRKSSTSDWPTDNQDGWESKQENE) are disordered. Positions 445 to 458 (KSSTSDWPTDNQDG) are enriched in polar residues. Position 472 is a phosphoserine (Ser-472). Positions 487 to 777 (IQEQALQKVG…VDPECLRWTP (291 aa)) are catalytic. Residues 503–777 (PQVRCPSVIE…VDPECLRWTP (275 aa)) enclose the MYST-type HAT domain. A mediates interaction with BRPF1, required for histone H3 acetyltransferase activity region spans residues 506 to 809 (RCPSVIEFGK…EPQGQERELE (304 aa)). Residues 536–561 (LYLCEFCLKYMKSRTILQQHMKKCGW) form a C2HC MYST-type zinc finger. Position 603 is an N6-acetyllysine; by autocatalysis (Lys-603). Acetyl-CoA is bound by residues 644 to 648 (SCIMI) and 653 to 659 (QRKGYGR). Glu-679 (proton donor/acceptor) is an active-site residue. Ser-683 is a binding site for acetyl-CoA. The tract at residues 784 to 939 (VVSEDEDEEA…DGKPDIPKGR (156 aa)) is disordered. Ser-786 carries the phosphoserine modification. Acidic residues predominate over residues 786–798 (SEDEDEEADEGEK). Residues 799–841 (EEPQGQERELETRVKVGKSVSREKKDQESSSLIETDKKPEVKE) show a composition bias toward basic and acidic residues. An N6-acetyllysine mark is found at Lys-813 and Lys-816. A Glycyl lysine isopeptide (Lys-Gly) (interchain with G-Cter in SUMO2) cross-link involves residue Lys-836. Basic residues predominate over residues 866-875 (RRGRCGRKNR). Residues 876–890 (KTQERFGDKDSKMLV) are compositionally biased toward basic and acidic residues. Tyr-901 is modified (phosphotyrosine). Residues 904-917 (CEEKSETSQERFTE) are compositionally biased toward basic and acidic residues. Phosphoserine is present on residues Ser-941 and Ser-954. Residues 983–1083 (GFSESSEEEE…EEEESELFPR (101 aa)) form a disordered region. Lys-1007 bears the N6-acetyllysine mark. Residues 1009-1030 (TLKRKKPILHRRRRVRKRKHHN) show a composition bias toward basic residues. Over residues 1031–1042 (SSVVTETISETT) the composition is skewed to low complexity. Acidic residues-rich tracts occupy residues 1043–1053 (EVLDEPFEDSD) and 1065–1079 (FEME…EESE). Phosphoserine occurs at positions 1090, 1091, and 1115. 5 disordered regions span residues 1096-1174 (RCQS…RKPG), 1197-1438 (IKPG…GAYQ), 1455-1533 (HTDE…PSVS), 1546-1568 (DLGS…STMG), and 1631-1707 (TCVV…CSMN). The segment covering 1107-1120 (EEEEEEEESDDADD) has biased composition (acidic residues). The segment covering 1136 to 1147 (NSASLEPDTSTP) has biased composition (polar residues). The segment covering 1148 to 1174 (MKKKKGWPKGKSRKPIHWKKRPGRKPG) has biased composition (basic residues). Basic and acidic residues predominate over residues 1204-1229 (RTQENEEIVEVKEDLLEERKEEMHTE). 2 stretches are compositionally biased toward acidic residues: residues 1230–1241 (PDEEAEEEEDTT) and 1282–1299 (EEPQ…DEVT). The segment covering 1317-1334 (HLDSLKTKEPEEQPARED) has biased composition (basic and acidic residues). Lys-1336 participates in a covalent cross-link: Glycyl lysine isopeptide (Lys-Gly) (interchain with G-Cter in SUMO2). Basic and acidic residues-rich tracts occupy residues 1352 to 1361 (DSRENTKDKD) and 1393 to 1414 (DSNT…HSEL). Residues 1473 to 1490 (HNSPISSIPSHPSQSVRS) show a composition bias toward low complexity. 2 stretches are compositionally biased toward polar residues: residues 1502-1523 (GYTQ…NMET) and 1550-1568 (IEST…STMG). The interaction with RUNX1-2 stretch occupies residues 1511 to 1636 (GSLSAPSMQN…KSPQTCVVER (126 aa)). Residues 1511 to 1740 (GSLSAPSMQN…YERIPGDFGA (230 aa)) form an interaction with PML region. Pro residues-rich tracts occupy residues 1640 to 1673 (NQQP…PPQP) and 1682 to 1698 (QPPP…PQQQ). The interval 1912–1947 (SMNMNTLNAMNSYRMTQPMMNSSYHSNPAYMNQTAQ) is required for activation of RUNX1-2.

The protein belongs to the MYST (SAS/MOZ) family. In terms of assembly, component of the MOZ/MORF complex composed at least of ING5, KAT6A, KAT6B, MEAF6 and one of BRPF1, BRD1/BRPF2 and BRPF3. Interacts with RUNX2. Interacts with RUNX1; phosphorylation of RUNX1 enhances the interaction. Interacts with p53/TP53. Interacts with PML and this interaction positively regulates its acetylation activity towards p53/TP53. Post-translationally, autoacetylated. Autoacetylation at Lys-603 is required for proper function. In terms of processing, phosphorylation at Thr-369 by PKB/AKT1 inhibits its interaction with PML and negatively regulates its acetylation activity towards p53/TP53.

Its subcellular location is the nucleus. It is found in the nucleolus. It localises to the nucleoplasm. The protein resides in the PML body. It catalyses the reaction L-lysyl-[protein] + acetyl-CoA = N(6)-acetyl-L-lysyl-[protein] + CoA + H(+). Functionally, histone acetyltransferase that acetylates lysine residues in histone H3 and histone H4 (in vitro). Component of the MOZ/MORF complex which has a histone H3 acetyltransferase activity. May act as a transcriptional coactivator for RUNX1 and RUNX2. Acetylates p53/TP53 at 'Lys-120' and 'Lys-382' and controls its transcriptional activity via association with PML. The chain is Histone acetyltransferase KAT6A (Kat6a) from Mus musculus (Mouse).